The primary structure comprises 154 residues: Myoglobin (154 aa).

The Globin domain occupies 2 to 148 (GLSEGEWQLV…FRKDIAAKYK (147 aa)). Residue serine 4 is modified to Phosphoserine. Histidine 65 provides a ligand contact to nitrite. Residue histidine 65 participates in O2 binding. Threonine 68 bears the Phosphothreonine mark. Histidine 94 provides a ligand contact to heme b.

In terms of assembly, monomer.

The protein resides in the cytoplasm. Its subcellular location is the sarcoplasm. The enzyme catalyses Fe(III)-heme b-[protein] + nitric oxide + H2O = Fe(II)-heme b-[protein] + nitrite + 2 H(+). It carries out the reaction H2O2 + AH2 = A + 2 H2O. Monomeric heme protein which primary function is to store oxygen and facilitate its diffusion within muscle tissues. Reversibly binds oxygen through a pentacoordinated heme iron and enables its timely and efficient release as needed during periods of heightened demand. Depending on the oxidative conditions of tissues and cells, and in addition to its ability to bind oxygen, it also has a nitrite reductase activity whereby it regulates the production of bioactive nitric oxide. Under stress conditions, like hypoxia and anoxia, it also protects cells against reactive oxygen species thanks to its pseudoperoxidase activity. In Delphinapterus leucas (Beluga whale), this protein is Myoglobin (MB).